Reading from the N-terminus, the 761-residue chain is Ribonucleoside-diphosphate reductase 1 subunit alpha (761 aa).

Residues Leu-5 to Gly-95 form the ATP-cone domain. Residues Lys-9, Glu-15–Lys-21, Thr-55, and Lys-91 each bind ATP. Thr-209 provides a ligand contact to GDP. Cys-225 and Cys-462 form a disulfide bridge. Residues Asp-232–Leu-234, Arg-262, and Arg-269 contribute to the dTTP site. The residue at position 283 (Lys-283) is an N6-acetyllysine. Position 437 (Asn-437) interacts with GDP. The Proton acceptor role is filled by Asn-437. Residue Cys-439 is the Cysteine radical intermediate of the active site. GDP-binding positions include Glu-441 and Glu-623 to Ser-625. Glu-441 functions as the Proton acceptor in the catalytic mechanism.

The protein belongs to the ribonucleoside diphosphate reductase large chain family. Tetramer of two alpha (R1) and two beta (R2) subunits. The B1 protein is a dimer of alpha subunits. A radical transfer pathway occurs between 'Tyr-122' of R2 and R1. Binding of the substrate occurs primarily when the active-site cysteines are reduced.

The enzyme catalyses a 2'-deoxyribonucleoside 5'-diphosphate + [thioredoxin]-disulfide + H2O = a ribonucleoside 5'-diphosphate + [thioredoxin]-dithiol. Under complex allosteric control mediated by deoxynucleoside triphosphates and ATP binding to separate specificity and activation sites on the alpha subunit. The type of nucleotide bound at the specificity site determines substrate preference. It seems probable that ATP makes the enzyme reduce CDP and UDP, dGTP favors ADP reduction and dTTP favors GDP reduction. Stimulated by ATP and inhibited by dATP binding to the activity site. In vitro, its activity is increased by dithiothreitol (DTT) or thioredoxins (non-specific). Inhibited by hydroxyurea, leads to dNTP depletion, replication fork arrest and genomic instability. In terms of biological role, provides the precursors necessary for DNA synthesis. Catalyzes the biosynthesis of deoxyribonucleotides from the corresponding ribonucleotides. R1 contains the binding sites for both substrates and allosteric effectors and carries out the actual reduction of the ribonucleotide. It also provides redox-active cysteines. The sequence is that of Ribonucleoside-diphosphate reductase 1 subunit alpha (nrdA) from Escherichia coli (strain K12).